A 122-amino-acid polypeptide reads, in one-letter code: Small ribosomal subunit protein uS13 (122 aa).

Positions 99-122 (RGQRTHTNARTRKGPAKAIAGKKK) are disordered.

This sequence belongs to the universal ribosomal protein uS13 family. Part of the 30S ribosomal subunit. Forms a loose heterodimer with protein S19. Forms two bridges to the 50S subunit in the 70S ribosome.

In terms of biological role, located at the top of the head of the 30S subunit, it contacts several helices of the 16S rRNA. In the 70S ribosome it contacts the 23S rRNA (bridge B1a) and protein L5 of the 50S subunit (bridge B1b), connecting the 2 subunits; these bridges are implicated in subunit movement. Contacts the tRNAs in the A and P-sites. The chain is Small ribosomal subunit protein uS13 from Sinorhizobium medicae (strain WSM419) (Ensifer medicae).